The chain runs to 1193 residues: DNA-directed RNA polymerase subunit beta (1193 aa).

The interval 1173–1193 (QQAKEAAELEKAKEEALDKTE) is disordered. Over residues 1177–1193 (EAAELEKAKEEALDKTE) the composition is skewed to basic and acidic residues.

The protein belongs to the RNA polymerase beta chain family. In terms of assembly, the RNAP catalytic core consists of 2 alpha, 1 beta, 1 beta' and 1 omega subunit. When a sigma factor is associated with the core the holoenzyme is formed, which can initiate transcription.

It carries out the reaction RNA(n) + a ribonucleoside 5'-triphosphate = RNA(n+1) + diphosphate. Its function is as follows. DNA-dependent RNA polymerase catalyzes the transcription of DNA into RNA using the four ribonucleoside triphosphates as substrates. This Streptococcus thermophilus (strain CNRZ 1066) protein is DNA-directed RNA polymerase subunit beta.